The sequence spans 148 residues: SsrA-binding protein (148 aa).

It belongs to the SmpB family.

It localises to the cytoplasm. Its function is as follows. Required for rescue of stalled ribosomes mediated by trans-translation. Binds to transfer-messenger RNA (tmRNA), required for stable association of tmRNA with ribosomes. tmRNA and SmpB together mimic tRNA shape, replacing the anticodon stem-loop with SmpB. tmRNA is encoded by the ssrA gene; the 2 termini fold to resemble tRNA(Ala) and it encodes a 'tag peptide', a short internal open reading frame. During trans-translation Ala-aminoacylated tmRNA acts like a tRNA, entering the A-site of stalled ribosomes, displacing the stalled mRNA. The ribosome then switches to translate the ORF on the tmRNA; the nascent peptide is terminated with the 'tag peptide' encoded by the tmRNA and targeted for degradation. The ribosome is freed to recommence translation, which seems to be the essential function of trans-translation. The protein is SsrA-binding protein of Ehrlichia canis (strain Jake).